Consider the following 131-residue polypeptide: Profilin (131 aa).

This sequence belongs to the profilin family. As to quaternary structure, occurs in many kinds of cells as a complex with monomeric actin in a 1:1 ratio.

The protein resides in the cytoplasm. It localises to the cytoskeleton. Binds to actin and affects the structure of the cytoskeleton. At high concentrations, profilin prevents the polymerization of actin, whereas it enhances it at low concentrations. By binding to PIP2, it inhibits the formation of IP3 and DG. The chain is Profilin from Fragaria ananassa (Strawberry).